The following is a 543-amino-acid chain: Gap junction alpha-10 protein (543 aa).

Topologically, residues 1-16 (MGDWNLLGGILEEVHS) are cytoplasmic. Residues 17-37 (HSTIVGKIWLTILFIFRMLVL) form a helical membrane-spanning segment. Residues 38-76 (RVAAEDVWDDEQSAFACNTRQPGCNNICYDDAFPISLIR) lie on the Extracellular side of the membrane. A helical membrane pass occupies residues 77–97 (FWVLQIIFVSSPSLVYMGHAL). At 98–165 (YRLRAFEKDR…TYVLHILTRS (68 aa)) the chain is on the cytoplasmic side. The helical transmembrane segment at 166–186 (VLEVGFMIGQYILYGFQMHPL) threads the bilayer. Over 187-209 (YKCTQPPCPNAVDCFVSRPTEKT) the chain is Extracellular. A helical membrane pass occupies residues 210-230 (IFMLFMHSIAAISLLLNILEI). At 231 to 543 (FHLGIRKIMR…HSIHSVKFNS (313 aa)) the chain is on the cytoplasmic side. Disordered regions lie at residues 306–359 (PQPR…SSFG) and 379–424 (PSFA…DRSR). Positions 317–328 (NGKKDWSEKDQH) are enriched in basic and acidic residues. Positions 344-359 (AGNQHLGQQSDHSSFG) are enriched in polar residues. The segment covering 400–413 (TDLHSHCRDSEGSM) has biased composition (basic and acidic residues).

Belongs to the connexin family. Alpha-type (group II) subfamily. A connexon is composed of a hexamer of connexins. In terms of tissue distribution, expressed in skeletal muscle and heart.

The protein localises to the cell membrane. It localises to the cell junction. Its subcellular location is the gap junction. One gap junction consists of a cluster of closely packed pairs of transmembrane channels, the connexons, through which materials of low MW diffuse from one cell to a neighboring cell. Involved in tracer coupling between horizontal cells of the retina. May play a role in the regulation of horizontal cell patterning. This is Gap junction alpha-10 protein (GJA10) from Homo sapiens (Human).